We begin with the raw amino-acid sequence, 62 residues long: Sauvatide (62 aa).

An N-terminal signal peptide occupies residues M1–G24. Positions E25–E46 are excised as a propeptide. Residue K58 is modified to Lysine amide.

Expressed by the skin glands.

The protein resides in the secreted. Functionally, induces contraction of smooth muscle in isolated rat urinary bladder with an EC(50) value of 2.2nM. The protein is Sauvatide of Phyllomedusa sauvagei (Sauvage's leaf frog).